Reading from the N-terminus, the 483-residue chain is Pentatricopeptide repeat-containing protein At5g18950 (483 aa).

PPR repeat units lie at residues 144 to 178 (EPTL…GISS), 179 to 213 (SVVT…EFDS), 218 to 246 (CLIR…GLDP), 247 to 281 (GQYV…NHFP), 282 to 316 (SMYI…GYAP), 317 to 351 (DRVV…GMRP), 352 to 386 (NEFA…GYGG), 387 to 421 (TMLS…GVTP), and 422 to 456 (NAIT…GLKP).

This sequence belongs to the PPR family. P subfamily.

This is Pentatricopeptide repeat-containing protein At5g18950 from Arabidopsis thaliana (Mouse-ear cress).